A 212-amino-acid polypeptide reads, in one-letter code: Pyridoxine/pyridoxamine 5'-phosphate oxidase (212 aa).

Residues 7 to 10 (RRQY) and lysine 65 contribute to the substrate site. FMN contacts are provided by residues 60–65 (RIVLLK), 75–76 (FT), arginine 81, lysine 82, and glutamine 104. The substrate site is built by tyrosine 122, arginine 126, and serine 130. FMN-binding positions include 139-140 (QS) and tryptophan 184. 190 to 192 (RLH) contacts substrate. Residue arginine 194 participates in FMN binding.

It belongs to the pyridoxamine 5'-phosphate oxidase family. Homodimer. FMN serves as cofactor.

The enzyme catalyses pyridoxamine 5'-phosphate + O2 + H2O = pyridoxal 5'-phosphate + H2O2 + NH4(+). It catalyses the reaction pyridoxine 5'-phosphate + O2 = pyridoxal 5'-phosphate + H2O2. It functions in the pathway cofactor metabolism; pyridoxal 5'-phosphate salvage; pyridoxal 5'-phosphate from pyridoxamine 5'-phosphate: step 1/1. It participates in cofactor metabolism; pyridoxal 5'-phosphate salvage; pyridoxal 5'-phosphate from pyridoxine 5'-phosphate: step 1/1. Functionally, catalyzes the oxidation of either pyridoxine 5'-phosphate (PNP) or pyridoxamine 5'-phosphate (PMP) into pyridoxal 5'-phosphate (PLP). The chain is Pyridoxine/pyridoxamine 5'-phosphate oxidase from Alteromonas mediterranea (strain DSM 17117 / CIP 110805 / LMG 28347 / Deep ecotype).